The chain runs to 376 residues: E3 ubiquitin-protein ligase RNF133 (376 aa).

In terms of domain architecture, PA spans S65–I167. The chain crosses the membrane as a helical span at residues Y190–I210. The RING-type; atypical zinc-finger motif lies at C256 to K297. Residues T328–P376 form a disordered region. A compositionally biased stretch (polar residues) spans N355 to H366.

In terms of assembly, interacts with E3 ligase UBE2J1. Auto-ubiquitinated.

It is found in the endoplasmic reticulum membrane. The enzyme catalyses S-ubiquitinyl-[E2 ubiquitin-conjugating enzyme]-L-cysteine + [acceptor protein]-L-lysine = [E2 ubiquitin-conjugating enzyme]-L-cysteine + N(6)-ubiquitinyl-[acceptor protein]-L-lysine.. It functions in the pathway protein modification; protein ubiquitination. In terms of biological role, has E3 ubiquitin-protein ligase activity. Plays a role in male fecundity through the interaction with the E2 ubituitin-protein ligase UBE2J1. The sequence is that of E3 ubiquitin-protein ligase RNF133 (RNF133) from Macaca fascicularis (Crab-eating macaque).